A 184-amino-acid chain; its full sequence is Large ribosomal subunit protein uL10 (184 aa).

This sequence belongs to the universal ribosomal protein uL10 family. As to quaternary structure, part of the ribosomal stalk of the 50S ribosomal subunit. The N-terminus interacts with L11 and the large rRNA to form the base of the stalk. The C-terminus forms an elongated spine to which L12 dimers bind in a sequential fashion forming a multimeric L10(L12)X complex.

Forms part of the ribosomal stalk, playing a central role in the interaction of the ribosome with GTP-bound translation factors. This Gluconobacter oxydans (strain 621H) (Gluconobacter suboxydans) protein is Large ribosomal subunit protein uL10.